The primary structure comprises 1619 residues: Rap-GAP domain-containing protein DDB_G0281809 (1619 aa).

Disordered stretches follow at residues 128 to 249 (SMSN…TTPI), 289 to 316 (QQQQQQSPSITTGTVKGSKYRESVMPGS), 907 to 974 (SIGG…PYIN), and 1134 to 1153 (ISNNNTTTTSNNSIKSTSNN). Low complexity-rich tracts occupy residues 130 to 204 (SNNN…SLSL) and 231 to 249 (QISATTTAATSPTTPTTPI). Residues 265–295 (FNEVVQQQQQQQQQQQQQQQQQQQQQQQQQS) are a coiled coil. Low complexity-rich tracts occupy residues 916–926 (SGNSSQPSSTG) and 934–965 (SGSKSNSSSSSSSQPSSTGGSGNNSNSANGGS). One can recognise a Rap-GAP domain in the interval 1273–1494 (LNMLDSVSER…TNRKKLISDI (222 aa)). The segment at 1554 to 1619 (IGTFTLPPPP…LSQSEDQSHK (66 aa)) is disordered. Over residues 1559–1573 (LPPPPISPTISPQPS) the composition is skewed to pro residues. Residues 1574-1590 (PHLSSSGGSWASSKGGS) are compositionally biased toward low complexity. Positions 1591 to 1619 (TQPTTPSGRTSNFLSRRPNLSQSEDQSHK) are enriched in polar residues.

The protein is Rap-GAP domain-containing protein DDB_G0281809 of Dictyostelium discoideum (Social amoeba).